Here is a 368-residue protein sequence, read N- to C-terminus: RNA polymerase sigma factor SigA (368 aa).

The disordered stretch occupies residues 60–86; it reads VVDENGDPSEHSLKKDEKEAEKAQAED. The segment covering 67-84 has biased composition (basic and acidic residues); the sequence is PSEHSLKKDEKEAEKAQA. A sigma-70 factor domain-2 region spans residues 135 to 205; sequence LAEANLRLVV…TRAIADQART (71 aa). Positions 159–162 match the Interaction with polymerase core subunit RpoC motif; sequence DLIQ. A sigma-70 factor domain-3 region spans residues 214–290; that stretch reads ETINKLIRIQ…DQDATSPAEH (77 aa). Residues 303-356 are sigma-70 factor domain-4; that stretch reads VLDTLTDREENVLRLRFGLDDGRTRTLEEVGKVFGVTRERIRQIEAKALRKLRH. Residues 329-348 constitute a DNA-binding region (H-T-H motif); sequence LEEVGKVFGVTRERIRQIEA.

Belongs to the sigma-70 factor family. RpoD/SigA subfamily. In terms of assembly, interacts transiently with the RNA polymerase catalytic core.

It is found in the cytoplasm. Its function is as follows. Sigma factors are initiation factors that promote the attachment of RNA polymerase to specific initiation sites and are then released. This sigma factor is the primary sigma factor during exponential growth. The polypeptide is RNA polymerase sigma factor SigA (Enterococcus faecalis (strain ATCC 700802 / V583)).